The following is a 119-amino-acid chain: uncharacterized protein (119 aa).

The next 2 helical transmembrane spans lie at 57–77 (FSHH…SILF) and 80–100 (YIFV…FILH).

The protein resides in the membrane. This is an uncharacterized protein from Saccharomyces cerevisiae (strain ATCC 204508 / S288c) (Baker's yeast).